A 72-amino-acid polypeptide reads, in one-letter code: Large ribosomal subunit protein bL31c (72 aa).

It belongs to the bacterial ribosomal protein bL31 family. Type A subfamily. In terms of assembly, part of the 50S ribosomal subunit.

The protein resides in the plastid. Its subcellular location is the chloroplast. Its function is as follows. Binds the 23S rRNA. This Phaeodactylum tricornutum (strain CCAP 1055/1) protein is Large ribosomal subunit protein bL31c (rpl31).